The following is a 115-amino-acid chain: Galanin-like peptide (115 aa).

A signal peptide spans 1–23 (MAPSVPLVLLLVLLLSLAETPAS). Positions 86–115 (NVMEAFAKPEIGDLDVLSKKIPKEEDVLKS) are excised as a propeptide.

This sequence belongs to the galanin family. As to expression, hypothalamus and pituitary gland.

It localises to the secreted. In terms of biological role, hypothalamic neuropeptide which binds to the G-protein-coupled galanin receptors (GALR1, GALR2 and GALR3). Involved in a large number of putative physiological functions in CNS homeostatic processes, including the regulation of gonadotropin-releasing hormone secretion. Exhibits potent and dose-dependent vasoconstrictor and anti-edema activity in the cutaneous microvasculature, a physiologic effects which does not appear to be mediated via GALR1 or GALR2. Exhibits antimicrobial activity against Gram-negative bacterias, inducing bacterial membrane blebbing. This is Galanin-like peptide (GALP) from Macaca nemestrina (Pig-tailed macaque).